The chain runs to 396 residues: Deoxyguanosinetriphosphate triphosphohydrolase-like protein (396 aa).

The HD domain maps to 69-211 (RLSHSLEVSQ…AALADDIAYN (143 aa)).

The protein belongs to the dGTPase family. Type 2 subfamily.

This is Deoxyguanosinetriphosphate triphosphohydrolase-like protein from Parvibaculum lavamentivorans (strain DS-1 / DSM 13023 / NCIMB 13966).